A 1497-amino-acid polypeptide reads, in one-letter code: Polyunsaturated fatty acid synthase subunit C (1497 aa).

2 dehydratase (DH) domain regions span residues 271 to 422 and 797 to 937; these read YKLC…DYGK and QGQY…RVRI. The segment covering 944 to 958 has biased composition (low complexity); the sequence is ASSSASSVGSSASAE. Residues 944–977 are disordered; that stretch reads ASSSASSVGSSASAEVAERTRSKAAPQPVASGPA. The enoylreductase (ER) domain stretch occupies residues 1026–1470; sequence LGDLGDRSFM…ILRGACYLRR (445 aa).

It belongs to the thioester dehydratase family. FabA subfamily. In terms of assembly, component of the polyunsaturated fatty acid synthase complex composed of at least ORF-A, ORF-B and ORF-C.

It functions in the pathway lipid metabolism; fatty acid biosynthesis. Polyketide synthase-like protein; part of the polyunsaturated fatty acid synthase composed of the 3 PKS-like subunits A, B and C. While the saturated fatty acids (SFAs) in Thraustochytrium are produced by the conventional fatty acid synthase (FAS) pathway, polyunsaturated fatty acids (PUFAs) including docosahexeanoic acid (DHA) and docosapentaenoic acid (DPA) are synthesized via an anaerobical PKS pathway. PUFA synthase assimilates fatty acyl-CoA, the product of FAS, as the starter unit to synthesize DPA, and this starter unit may be butyryl-CoA, hexanoyl-CoA, or octanoyl-CoA. DPA and DHA biosynthesis seem to differ by the reduction at the N-3 position by PUFA synthase, not the extension of carbon chain. In DHA biosynthesis, PUFA synthase extends the fatty acyl chain from the methyl toward the carboxyl end, and the double bond is formed when the carbon chain is growing, instead of afterward. Therefore, PUFA synthase is unable to transform DPA to DHA, suggesting that DPA is not the precursor of DHA. Moreover, DPA molecule is partly extended by FAS KS domain, so DPA biosynthesis is less dependent on PUFA synthase KS domain than DHA. The chain is Polyunsaturated fatty acid synthase subunit C from Thraustochytrium sp. (strain ATCC 26185 / S-3).